Consider the following 158-residue polypeptide: Oocyte-secreted protein 2 (158 aa).

Positions 1-17 are cleaved as a signal peptide; the sequence is MALEVLMLLAVLIWTGA.

It belongs to the PLAC1 family. In terms of tissue distribution, highly expressed in oocytes.

It is found in the secreted. It localises to the cytoplasm. In terms of biological role, involved in oocyte maturation. The chain is Oocyte-secreted protein 2 (OOSP2) from Homo sapiens (Human).